A 238-amino-acid chain; its full sequence is Ribonuclease PH (238 aa).

Phosphate-binding positions include arginine 86 and 124-126 (GTR).

This sequence belongs to the RNase PH family. Homohexameric ring arranged as a trimer of dimers.

It carries out the reaction tRNA(n+1) + phosphate = tRNA(n) + a ribonucleoside 5'-diphosphate. Its function is as follows. Phosphorolytic 3'-5' exoribonuclease that plays an important role in tRNA 3'-end maturation. Removes nucleotide residues following the 3'-CCA terminus of tRNAs; can also add nucleotides to the ends of RNA molecules by using nucleoside diphosphates as substrates, but this may not be physiologically important. Probably plays a role in initiation of 16S rRNA degradation (leading to ribosome degradation) during starvation. This Agrobacterium fabrum (strain C58 / ATCC 33970) (Agrobacterium tumefaciens (strain C58)) protein is Ribonuclease PH.